A 266-amino-acid chain; its full sequence is Mitochondrial S-adenosylmethionine carrier protein (266 aa).

Solcar repeat units lie at residues 4–77, 85–167, and 176–264; these read RELC…AKRF, LSPI…LKNL, and VDCW…VRSS. 6 helical membrane-spanning segments follow: residues 5-25, 49-69, 84-104, 141-161, 181-201, and 237-257; these read ELCA…LILF, IYAG…AFFV, YLSP…ACLI, RGYK…FPLW, SAVC…PLDV, and FAGV…FLGA.

It belongs to the mitochondrial carrier (TC 2.A.29) family.

The protein localises to the mitochondrion inner membrane. It catalyses the reaction S-adenosyl-L-homocysteine(out) + S-adenosyl-L-methionine(in) = S-adenosyl-L-homocysteine(in) + S-adenosyl-L-methionine(out). Mitochondrial S-adenosyl-L-methionine/S-adenosyl-L-homocysteine antiporter. Mediates the exchange of cytosolic S-adenosyl-L-methionine, the predominant methyl-group donor for macromolecule methylation processes, for mitochondrial S-adenosylhomocysteine(SAH), a by-product of methylation reactions. The chain is Mitochondrial S-adenosylmethionine carrier protein (slc25a26) from Xenopus laevis (African clawed frog).